Reading from the N-terminus, the 538-residue chain is MSSVAENIIQHATHNSTLHQLAKDQPSVGVTTAFSILDTLKSMSYLKIFATLICILLVWDQVAYQIKKGSIAGPKFKFWPIIGPFLESLDPKFEEYKAKWASGPLSCVSIFHKFVVIASTRDLARKILQSSKFVKPCVVDVAVKILRPCNWVFLDGKAHTDYRKSLNGLFTKQALAQYLPSLEQIMDKYMDKFVRLSKENNYEPQVFFHEMREILCALSLNSFCGNYITEDQVRKIADDYYLVTAALELVNFPIIIPYTKTWYGKKTADMAMKIFENCAQMAKDHIAAGGKPVCVMDAWCKLMHDAKNSNDDDSRIYHREFTNKEISEAVFTFLFASQDASSSLACWLFQIVADRPDVLAKIREEQLAVRNNDMSTELNLDLIEKMKYTNMVIKETLRYRPPVLMVPYVVKKNFPVSPNYTAPKGAMLIPTLYPALHDPEVYENPDEFIPERWVEGSKASEAKKNWLVFGCGPHVCLGQTYVMITFAALLGKFALYTDFHHTVTPLSEKIKVFATIFPKDDLLLTFKKRDPITGEVFE.

A helical membrane pass occupies residues 46 to 66; the sequence is LKIFATLICILLVWDQVAYQI. Residues K164 and K198 each participate in a glycyl lysine isopeptide (Lys-Gly) (interchain with G-Cter in ubiquitin) cross-link. C476 is a binding site for heme.

This sequence belongs to the cytochrome P450 family. In terms of assembly, interacts with ERG28. Heme serves as cofactor.

The protein resides in the endoplasmic reticulum membrane. It catalyses the reaction 5-dehydroepisterol + NADPH + O2 + H(+) = ergosta-5,7,22,24(28)-tetraen-3beta-ol + NADP(+) + 2 H2O. Its pathway is steroid metabolism; ergosterol biosynthesis; ergosterol from zymosterol: step 4/5. Its function is as follows. C-22 sterol desaturase; part of the third module of ergosterol biosynthesis pathway that includes the late steps of the pathway. ERG5 converts 5-dehydroepisterol into ergosta-5,7,22,24(28)-tetraen-3beta-ol by forming the C-22(23) double bond in the sterol side chain. The third module or late pathway involves the ergosterol synthesis itself through consecutive reactions that mainly occur in the endoplasmic reticulum (ER) membrane. Firstly, the squalene synthase ERG9 catalyzes the condensation of 2 farnesyl pyrophosphate moieties to form squalene, which is the precursor of all steroids. Squalene synthase is crucial for balancing the incorporation of farnesyl diphosphate (FPP) into sterol and nonsterol isoprene synthesis. Secondly, the squalene epoxidase ERG1 catalyzes the stereospecific oxidation of squalene to (S)-2,3-epoxysqualene, which is considered to be a rate-limiting enzyme in steroid biosynthesis. Then, the lanosterol synthase ERG7 catalyzes the cyclization of (S)-2,3 oxidosqualene to lanosterol, a reaction that forms the sterol core. In the next steps, lanosterol is transformed to zymosterol through a complex process involving various demethylation, reduction and desaturation reactions. The lanosterol 14-alpha-demethylase ERG11 (also known as CYP51) catalyzes C14-demethylation of lanosterol to produce 4,4'-dimethyl cholesta-8,14,24-triene-3-beta-ol, which is critical for ergosterol biosynthesis. The C-14 reductase ERG24 reduces the C14=C15 double bond of 4,4-dimethyl-cholesta-8,14,24-trienol to produce 4,4-dimethyl-cholesta-8,24-dienol. 4,4-dimethyl-cholesta-8,24-dienol is substrate of the C-4 demethylation complex ERG25-ERG26-ERG27 in which ERG25 catalyzes the three-step monooxygenation required for the demethylation of 4,4-dimethyl and 4alpha-methylsterols, ERG26 catalyzes the oxidative decarboxylation that results in a reduction of the 3-beta-hydroxy group at the C-3 carbon to an oxo group, and ERG27 is responsible for the reduction of the keto group on the C-3. ERG28 has a role as a scaffold to help anchor ERG25, ERG26 and ERG27 to the endoplasmic reticulum and ERG29 regulates the activity of the iron-containing C4-methylsterol oxidase ERG25. Then, the sterol 24-C-methyltransferase ERG6 catalyzes the methyl transfer from S-adenosyl-methionine to the C-24 of zymosterol to form fecosterol. The C-8 sterol isomerase ERG2 catalyzes the reaction which results in unsaturation at C-7 in the B ring of sterols and thus converts fecosterol to episterol. The sterol-C5-desaturase ERG3 then catalyzes the introduction of a C-5 double bond in the B ring to produce 5-dehydroepisterol. The C-22 sterol desaturase ERG5 further converts 5-dehydroepisterol into ergosta-5,7,22,24(28)-tetraen-3beta-ol by forming the C-22(23) double bond in the sterol side chain. Finally, ergosta-5,7,22,24(28)-tetraen-3beta-ol is substrate of the C-24(28) sterol reductase ERG4 to produce ergosterol. The protein is C-22 sterol desaturase ERG5 of Saccharomyces cerevisiae (strain ATCC 204508 / S288c) (Baker's yeast).